A 161-amino-acid chain; its full sequence is MKKTSKKNNNFKIPGTELNSADAERGKEESQRNFVELLPLEVTYKIFSQLDIQSLCRASRTCTGWNCAIRNNDSLWKPHCLTIRAVCQREIDDDIKSGYTWRVILLRNYQKSKVKYEWLSGRYSNIRSPVNLPEKAMCPMDADTWGEILDAELEREVEKLQ.

Positions 1–25 (MKKTSKKNNNFKIPGTELNSADAER) are disordered. Positions 32–79 (RNFVELLPLEVTYKIFSQLDIQSLCRASRTCTGWNCAIRNNDSLWKPH) constitute an F-box domain.

This is F-box only protein 48 (Fbxo48) from Mus musculus (Mouse).